Reading from the N-terminus, the 98-residue chain is NADH-ubiquinone oxidoreductase chain 4L (98 aa).

The next 3 membrane-spanning stretches (helical) occupy residues 1–21, 26–46, and 59–79; these read MTPI…GLAF, LLSA…ALSL, and APML…ALMV.

It belongs to the complex I subunit 4L family.

It is found in the mitochondrion membrane. The catalysed reaction is a ubiquinone + NADH + 5 H(+)(in) = a ubiquinol + NAD(+) + 4 H(+)(out). Core subunit of the mitochondrial membrane respiratory chain NADH dehydrogenase (Complex I) which catalyzes electron transfer from NADH through the respiratory chain, using ubiquinone as an electron acceptor. Part of the enzyme membrane arm which is embedded in the lipid bilayer and involved in proton translocation. This is NADH-ubiquinone oxidoreductase chain 4L (MT-ND4L) from Tetraodon nigroviridis (Spotted green pufferfish).